Reading from the N-terminus, the 776-residue chain is Ribosomal RNA large subunit methyltransferase K/L (776 aa).

Residues 68–183 enclose the THUMP domain; sequence DLYKICLWSR…DKQAELYLDL (116 aa).

Belongs to the methyltransferase superfamily. RlmKL family.

It is found in the cytoplasm. It catalyses the reaction guanosine(2445) in 23S rRNA + S-adenosyl-L-methionine = N(2)-methylguanosine(2445) in 23S rRNA + S-adenosyl-L-homocysteine + H(+). It carries out the reaction guanosine(2069) in 23S rRNA + S-adenosyl-L-methionine = N(2)-methylguanosine(2069) in 23S rRNA + S-adenosyl-L-homocysteine + H(+). Specifically methylates the guanine in position 2445 (m2G2445) and the guanine in position 2069 (m7G2069) of 23S rRNA. In Psychrobacter cryohalolentis (strain ATCC BAA-1226 / DSM 17306 / VKM B-2378 / K5), this protein is Ribosomal RNA large subunit methyltransferase K/L.